A 145-amino-acid chain; its full sequence is Protein SprT-like (145 aa).

The 137-residue stretch at 5–141 (DYVREVSLAD…CGRCHGRLIK (137 aa)) folds into the SprT-like domain. A Zn(2+)-binding site is contributed by histidine 64. Glutamate 65 is a catalytic residue. Histidine 68 serves as a coordination point for Zn(2+).

It belongs to the SprT family. Zn(2+) serves as cofactor.

It localises to the cytoplasm. The protein is Protein SprT-like of Streptococcus equi subsp. zooepidemicus (strain H70).